A 308-amino-acid chain; its full sequence is MFSGKVRAFIDEELFHSNRNNSSDGLSLDTPLAIHTPAKGFDADLSPQSLYDLHTVTTPVTPLAPDEWDFSLDQSSGVIPSPSSFLSDHNNNNLFSDDTISRQYSNTDDINPSDFGGQCAILDSQNFTLSNASTKSKWSFTKHGSNTPSDSSSPLCNSSKRVVGMLRRFLPSSRMVRLSKAHQPLRIPTTGVSLDSADLTPLSVSTSHLNHPSTSNSPDPLYSASQPPSIKTDASPVDIKNMDAAEKLKKIDLLLEEILQLDSAYDAAERRMIESGWSSVDEIRDVHNKRLDAWSEWKQKLLPLKKCC.

Polar residues-rich tracts occupy residues 138–148 (WSFTKHGSNTP) and 205–229 (STSH…QPPS). 2 disordered regions span residues 138–157 (WSFT…PLCN) and 205–235 (STSH…TDAS).

The protein resides in the cytoplasm. This is an uncharacterized protein from Schizosaccharomyces pombe (strain 972 / ATCC 24843) (Fission yeast).